The chain runs to 157 residues: Cyclic pyranopterin monophosphate synthase (157 aa).

Residues 73–75 (LCH) and 110–111 (ME) contribute to the substrate site. The active site involves Asp125.

Belongs to the MoaC family. In terms of assembly, homohexamer; trimer of dimers.

The enzyme catalyses (8S)-3',8-cyclo-7,8-dihydroguanosine 5'-triphosphate = cyclic pyranopterin phosphate + diphosphate. Its pathway is cofactor biosynthesis; molybdopterin biosynthesis. Functionally, catalyzes the conversion of (8S)-3',8-cyclo-7,8-dihydroguanosine 5'-triphosphate to cyclic pyranopterin monophosphate (cPMP). This chain is Cyclic pyranopterin monophosphate synthase, found in Pseudomonas fluorescens (strain SBW25).